Here is a 475-residue protein sequence, read N- to C-terminus: Ribulose bisphosphate carboxylase large chain (475 aa).

Residues 1 to 2 constitute a propeptide that is removed on maturation; sequence MS. The residue at position 3 (proline 3) is an N-acetylproline. Position 14 is an N6,N6,N6-trimethyllysine (lysine 14). Asparagine 123 and threonine 173 together coordinate substrate. The active-site Proton acceptor is the lysine 175. Lysine 177 is a substrate binding site. Lysine 201, aspartate 203, and glutamate 204 together coordinate Mg(2+). An N6-carboxylysine modification is found at lysine 201. Catalysis depends on histidine 294, which acts as the Proton acceptor. Residues arginine 295, histidine 327, and serine 379 each coordinate substrate.

This sequence belongs to the RuBisCO large chain family. Type I subfamily. In terms of assembly, heterohexadecamer of 8 large chains and 8 small chains; disulfide-linked. The disulfide link is formed within the large subunit homodimers. Mg(2+) is required as a cofactor. In terms of processing, the disulfide bond which can form in the large chain dimeric partners within the hexadecamer appears to be associated with oxidative stress and protein turnover.

It localises to the plastid. The protein localises to the chloroplast. It catalyses the reaction 2 (2R)-3-phosphoglycerate + 2 H(+) = D-ribulose 1,5-bisphosphate + CO2 + H2O. It carries out the reaction D-ribulose 1,5-bisphosphate + O2 = 2-phosphoglycolate + (2R)-3-phosphoglycerate + 2 H(+). RuBisCO catalyzes two reactions: the carboxylation of D-ribulose 1,5-bisphosphate, the primary event in carbon dioxide fixation, as well as the oxidative fragmentation of the pentose substrate in the photorespiration process. Both reactions occur simultaneously and in competition at the same active site. This chain is Ribulose bisphosphate carboxylase large chain, found in Physcomitrium patens (Spreading-leaved earth moss).